We begin with the raw amino-acid sequence, 608 residues long: MKLTYYYYAFCIIKVIASLRLDSYKKQNVFFLKAFFKNVINIKKERKKNLVNSFFYVGRRNKIPIKYSNNEFYNIHNENYDNTKYYNNNNNTNDYDKKDNNVGKRKYSRKNMLYMNSSEKDNFLNENILKKKSSEKEIEQSLTPLNMDWVKVMNLIYSSNDIDATTLAFNAAMSAVEKKGCLSTMLDLIGTMKSKNIKPDLVSYKLVLSLCDKYHLVDTAEILFEEMIESDKINPNYEIYAIMISCYAKTGNGYKAIELFEKLRNDPFVEEMRSLNITNTNDNKENSNDLQTSIIHNNMEDNNNNNNNNDNNIYDDKFKHISNKIKNVENCSGKIQYSEYANVIYACNISNLYEQGIKYFEELLKSGKYMPSIFVFENIFDLLSKNGDYEKSLEYYNNLKNDPNFKKNINVNILNNLLKALSIHNKINVAEDIWNNEFDELLLTPNNLSYQILLKIYSHIDNYEKAFKLFKEMQVNKLLNNKNILPFIYTIESTKNCGIYNYAIYVLRVAKLLNFKANDLLMLYNNTMISCINSKKYDVIISLYAELINMQQKDTSFQININTLTFVLLAFKELNMKQDFINLKNIIIQRNYKLPPLCSKIFSETENY.

PPR repeat units follow at residues 165 to 199 (TTLA…NIKP), 200 to 230 (DLVS…MIES), 236 to 270 (NYEI…PFVE), 336 to 370 (QYSE…GKYM), 372 to 402 (SIFV…LKND), 410 to 445 (NVNI…LLTP), and 446 to 480 (NNLS…KLLN).

This sequence belongs to the PPR family. P subfamily. Homodimer.

It is found in the plastid. Its subcellular location is the apicoplast. Functionally, binds to apicoplast RNA transcripts, preferentially to the motif UUAU, and protects RNA transcripts from degradation by ribonuclease. The chain is Pentatricopeptide repeat-containing protein 1, apicoplast from Plasmodium falciparum (isolate 3D7).